Here is a 237-residue protein sequence, read N- to C-terminus: LexA repressor (237 aa).

The segment at residues 26–46 (FDEMKIALELTSKSGIHRLIT) is a DNA-binding region (H-T-H motif). Residues Ser158 and Lys196 each act as for autocatalytic cleavage activity in the active site.

It belongs to the peptidase S24 family. In terms of assembly, homodimer.

The enzyme catalyses Hydrolysis of Ala-|-Gly bond in repressor LexA.. Its function is as follows. Represses a number of genes involved in the response to DNA damage (SOS response), including recA and lexA. In the presence of single-stranded DNA, RecA interacts with LexA causing an autocatalytic cleavage which disrupts the DNA-binding part of LexA, leading to derepression of the SOS regulon and eventually DNA repair. The protein is LexA repressor of Bartonella quintana (strain Toulouse) (Rochalimaea quintana).